The primary structure comprises 249 residues: Probable proteasome subunit alpha type-2 (249 aa).

This sequence belongs to the peptidase T1A family. As to quaternary structure, the 26S proteasome consists of a 20S proteasome core and two 19S regulatory subunits. The 20S proteasome core is composed of 28 subunits that are arranged in four stacked rings, resulting in a barrel-shaped structure. The two end rings are each formed by seven alpha subunits, and the two central rings are each formed by seven beta subunits. The catalytic chamber with the active sites is on the inside of the barrel.

Its subcellular location is the cytoplasm. The protein resides in the nucleus. The proteasome is a multicatalytic proteinase complex which is characterized by its ability to cleave peptides with Arg, Phe, Tyr, Leu, and Glu adjacent to the leaving group at neutral or slightly basic pH. The proteasome has an ATP-dependent proteolytic activity. The chain is Probable proteasome subunit alpha type-2 (pca-2) from Neurospora crassa (strain ATCC 24698 / 74-OR23-1A / CBS 708.71 / DSM 1257 / FGSC 987).